Consider the following 535-residue polypeptide: CTP synthase (535 aa).

The tract at residues 1–268 (MKTKYIFVTG…DSLVCKKLEL (268 aa)) is amidoligase domain. Serine 14 contacts CTP. Serine 14 contacts UTP. 15–20 (SLGKGI) contacts ATP. Tyrosine 55 lines the L-glutamine pocket. ATP is bound at residue aspartate 72. Mg(2+)-binding residues include aspartate 72 and glutamate 142. CTP is bound by residues 149 to 151 (DIE), 189 to 194 (KTKPTQ), and lysine 225. UTP-binding positions include 189–194 (KTKPTQ) and lysine 225. The Glutamine amidotransferase type-1 domain maps to 293–535 (TIGLVGKYVE…IKVACTVKEK (243 aa)). Residue glycine 355 participates in L-glutamine binding. The active-site Nucleophile; for glutamine hydrolysis is the cysteine 382. L-glutamine-binding positions include 383 to 386 (LGMQ), glutamate 406, and arginine 463. Catalysis depends on residues histidine 508 and glutamate 510.

Belongs to the CTP synthase family. Homotetramer.

The enzyme catalyses UTP + L-glutamine + ATP + H2O = CTP + L-glutamate + ADP + phosphate + 2 H(+). The catalysed reaction is L-glutamine + H2O = L-glutamate + NH4(+). It catalyses the reaction UTP + NH4(+) + ATP = CTP + ADP + phosphate + 2 H(+). Its pathway is pyrimidine metabolism; CTP biosynthesis via de novo pathway; CTP from UDP: step 2/2. With respect to regulation, allosterically activated by GTP, when glutamine is the substrate; GTP has no effect on the reaction when ammonia is the substrate. The allosteric effector GTP functions by stabilizing the protein conformation that binds the tetrahedral intermediate(s) formed during glutamine hydrolysis. Inhibited by the product CTP, via allosteric rather than competitive inhibition. Catalyzes the ATP-dependent amination of UTP to CTP with either L-glutamine or ammonia as the source of nitrogen. Regulates intracellular CTP levels through interactions with the four ribonucleotide triphosphates. This Clostridium acetobutylicum (strain ATCC 824 / DSM 792 / JCM 1419 / IAM 19013 / LMG 5710 / NBRC 13948 / NRRL B-527 / VKM B-1787 / 2291 / W) protein is CTP synthase.